The chain runs to 209 residues: Uracil phosphoribosyltransferase (209 aa).

Residues arginine 79, arginine 104, and 131-139 (DPMLATGGS) contribute to the 5-phospho-alpha-D-ribose 1-diphosphate site. Uracil contacts are provided by residues isoleucine 194 and 199–201 (GDA). Aspartate 200 contributes to the 5-phospho-alpha-D-ribose 1-diphosphate binding site.

It belongs to the UPRTase family. The cofactor is Mg(2+).

The enzyme catalyses UMP + diphosphate = 5-phospho-alpha-D-ribose 1-diphosphate + uracil. Its pathway is pyrimidine metabolism; UMP biosynthesis via salvage pathway; UMP from uracil: step 1/1. With respect to regulation, allosterically activated by GTP. Functionally, catalyzes the conversion of uracil and 5-phospho-alpha-D-ribose 1-diphosphate (PRPP) to UMP and diphosphate. The polypeptide is Uracil phosphoribosyltransferase (Streptococcus pneumoniae (strain ATCC BAA-255 / R6)).